The primary structure comprises 1442 residues: Sulfite reductase [NADPH] subunit beta (1442 aa).

The 150-residue stretch at 682 to 831 (LHVYYASDGG…AYSEWEPKLW (150 aa)) folds into the Flavodoxin-like domain. A Phosphoserine modification is found at serine 903. [4Fe-4S] cluster contacts are provided by cysteine 1300, cysteine 1306, cysteine 1345, and cysteine 1349. Cysteine 1349 lines the siroheme pocket.

Belongs to the nitrite and sulfite reductase 4Fe-4S domain family. In terms of assembly, alpha(2)-beta(2). The alpha component is a flavoprotein, the beta component is a hemoprotein. Siroheme is required as a cofactor. [4Fe-4S] cluster serves as cofactor.

It is found in the cytoplasm. The enzyme catalyses hydrogen sulfide + 3 NADP(+) + 3 H2O = sulfite + 3 NADPH + 4 H(+). It functions in the pathway sulfur metabolism; hydrogen sulfide biosynthesis; hydrogen sulfide from sulfite (NADPH route): step 1/1. Functionally, catalyzes the reduction of sulfite to sulfide, one of several activities required for the biosynthesis of L-cysteine from sulfate. In Saccharomyces cerevisiae (strain ATCC 204508 / S288c) (Baker's yeast), this protein is Sulfite reductase [NADPH] subunit beta (MET5).